The sequence spans 345 residues: Beta-2-glycoprotein 1 (345 aa).

An N-terminal signal peptide occupies residues 1–19; that stretch reads MPPPALVLLLGFLCHVAIA. Sushi domains lie at 21-81, 82-139, 140-202, and 203-262; these read RTCP…KCMP, RVCP…VCAP, ITCP…ECRE, and VRCP…SCKA. 11 disulfides stabilise this stretch: cysteine 23/cysteine 66, cysteine 51/cysteine 79, cysteine 84/cysteine 124, cysteine 110/cysteine 137, cysteine 142/cysteine 188, cysteine 174/cysteine 200, cysteine 205/cysteine 248, cysteine 234/cysteine 260, cysteine 264/cysteine 315, cysteine 300/cysteine 325, and cysteine 307/cysteine 345. The O-linked (GalNAc...) threonine glycan is linked to threonine 33. N-linked (GlcNAc...) asparagine glycosylation occurs at asparagine 92. Residues asparagine 162, asparagine 183, and asparagine 193 are each glycosylated (N-linked (GlcNAc...) asparagine). Asparagine 253 is a glycosylation site (N-linked (GlcNAc...) asparagine). Residues 263–345 form a sushi-like region; that stretch reads SCKLSIKRAT…KTDASDVKPC (83 aa).

As to expression, expressed by the liver and secreted in plasma.

It localises to the secreted. Its function is as follows. Binds to various kinds of negatively charged substances such as heparin, phospholipids, and dextran sulfate. May prevent activation of the intrinsic blood coagulation cascade by binding to phospholipids on the surface of damaged cells. The chain is Beta-2-glycoprotein 1 (APOH) from Bos taurus (Bovine).